The following is a 142-amino-acid chain: MKTFVAKPETVKRDWYVVDATGKTLGRLATELARRLRGKHKAEYTPHVDTGDYIVVINAEKVAVTGNKETDKLYYWHTGYVGGIKQATFKEMIARRPEAVIEIAVKGMLPKGPLGRAMFRKLKVYAGSEHNHAAQQPQVLDI.

This sequence belongs to the universal ribosomal protein uL13 family. In terms of assembly, part of the 50S ribosomal subunit.

Functionally, this protein is one of the early assembly proteins of the 50S ribosomal subunit, although it is not seen to bind rRNA by itself. It is important during the early stages of 50S assembly. The polypeptide is Large ribosomal subunit protein uL13 (Histophilus somni (strain 129Pt) (Haemophilus somnus)).